A 319-amino-acid polypeptide reads, in one-letter code: ATP-dependent 6-phosphofructokinase (319 aa).

Residue Gly-11 participates in ATP binding. Position 21–25 (21–25) interacts with ADP; sequence RAVVR. ATP-binding positions include 72-73 and 102-105; these read RC and GDGS. Asp-103 is a Mg(2+) binding site. A substrate-binding site is contributed by 125–127; that stretch reads TID. Asp-127 serves as the catalytic Proton acceptor. Arg-154 serves as a coordination point for ADP. Residues Arg-162 and 169-171 contribute to the substrate site; that span reads MGR. Residues 185 to 187, Arg-211, and 213 to 215 contribute to the ADP site; these read GAE and KKH. Residues Glu-222, Arg-243, and 249 to 252 each bind substrate; that span reads HVQR.

This sequence belongs to the phosphofructokinase type A (PFKA) family. ATP-dependent PFK group I subfamily. Prokaryotic clade 'B1' sub-subfamily. As to quaternary structure, homotetramer. Mg(2+) serves as cofactor.

The protein resides in the cytoplasm. It carries out the reaction beta-D-fructose 6-phosphate + ATP = beta-D-fructose 1,6-bisphosphate + ADP + H(+). Its pathway is carbohydrate degradation; glycolysis; D-glyceraldehyde 3-phosphate and glycerone phosphate from D-glucose: step 3/4. Its activity is regulated as follows. Allosterically activated by ADP and other diphosphonucleosides, and allosterically inhibited by phosphoenolpyruvate. Its function is as follows. Catalyzes the phosphorylation of D-fructose 6-phosphate to fructose 1,6-bisphosphate by ATP, the first committing step of glycolysis. The chain is ATP-dependent 6-phosphofructokinase from Bacillus cereus (strain B4264).